A 108-amino-acid chain; its full sequence is Ferredoxin, plant-type (108 aa).

The 2Fe-2S ferredoxin-type domain occupies phenylalanine 5–proline 96. [2Fe-2S] cluster-binding residues include cysteine 40, cysteine 45, cysteine 48, and cysteine 80.

It belongs to the 2Fe2S plant-type ferredoxin family.

It functions in the pathway aromatic compound metabolism; catechol degradation. Functionally, ferredoxins are iron-sulfur proteins that transfer electrons in a wide variety of metabolic reactions. This is Ferredoxin, plant-type (nahT) from Pseudomonas putida (Arthrobacter siderocapsulatus).